The following is a 500-amino-acid chain: MVYDLIVIGGGSGGMAAARRAARHNAKVALVEKSRLGGTCVNVGCVPKKIMFNAASVHDILENSRHYGFDTKFSFNLPLLVERRDKYIQRLNNIYRQNLSKDKVDLYEGTASFLSENRILIKGTKDNNNKDNGPLNEEILEGRNILIAVGNKPVFPPVKGIENTISSDEFFNIKESKKIGIVGSGYIAVELINVIKRLGIDSYIFARGNRILRKFDESVINVLENDMKKNNINIVTFADVVEIKKVSDKNLSIHLSDGRIYEHFDHVIYCVGRSPDTENLKLEKLNVETNNNYIVVDENQRTSVNNIYAVGDCCMVKKSKEIEDLNLLKLYNEERYLNKKENVTEDIFYNVQLTPVAINAGRLLADRLFLKKTRKTNYKLIPTVIFSHPPIGTIGLSEEAAIQIYGKENVKIYESKFTNLFFSVYDIEPELKEKTYLKLVCVGKDELIKGLHIIGLNADEIVQGFAVALKMNATKKDFDETIPIHPTAAEEFLTLQPWMK.

The FAD site is built by Ser-12 and Gly-13. Ser-12 contacts glutathione. Residue Arg-19 coordinates glutathione. FAD-binding residues include Glu-32, Thr-39, Cys-40, and Lys-48. Cysteines 40 and 45 form a disulfide. A glutathione-binding site is contributed by Tyr-95. Ala-111 contributes to the FAD binding site. The NADP(+) site is built by Ile-187, Glu-190, Arg-207, Arg-213, and Gly-272. Positions 312 and 354 each coordinate FAD. A glutathione-binding site is contributed by Arg-362. Val-384 is a binding site for NADP(+). His-485 lines the FAD pocket. The active-site Proton acceptor is His-485.

Belongs to the class-I pyridine nucleotide-disulfide oxidoreductase family. Homodimer. FAD is required as a cofactor.

It localises to the cytoplasm. It carries out the reaction 2 glutathione + NADP(+) = glutathione disulfide + NADPH + H(+). Its function is as follows. Catalyzes the reduction of glutathione disulfide (GSSG) to reduced glutathione (GSH). Constitutes the major mechanism to maintain a high GSH:GSSG ratio in the cytosol. This chain is Glutathione reductase, found in Plasmodium falciparum (isolate K1 / Thailand).